Consider the following 167-residue polypeptide: Transcription factor E (167 aa).

Residues 5–87 (ENPIHRAYLL…LWKICPESLD (83 aa)) enclose the HTH TFE/IIEalpha-type domain.

This sequence belongs to the TFE family. As to quaternary structure, monomer. Interaction with RNA polymerase subunits RpoF and RpoE is necessary for Tfe stimulatory transcription activity. Able to interact with Tbp and RNA polymerase in the absence of DNA promoter. Interacts both with the preinitiation and elongation complexes.

Transcription factor that plays a role in the activation of archaeal genes transcribed by RNA polymerase. Facilitates transcription initiation by enhancing TATA-box recognition by TATA-box-binding protein (Tbp), and transcription factor B (Tfb) and RNA polymerase recruitment. Not absolutely required for transcription in vitro, but particularly important in cases where Tbp or Tfb function is not optimal. It dynamically alters the nucleic acid-binding properties of RNA polymerases by stabilizing the initiation complex and destabilizing elongation complexes. Seems to translocate with the RNA polymerase following initiation and acts by binding to the non template strand of the transcription bubble in elongation complexes. This is Transcription factor E from Methanothrix thermoacetophila (strain DSM 6194 / JCM 14653 / NBRC 101360 / PT) (Methanosaeta thermophila).